A 272-amino-acid chain; its full sequence is Bis(5'-nucleosyl)-tetraphosphatase, symmetrical (272 aa).

The protein belongs to the Ap4A hydrolase family.

The enzyme catalyses P(1),P(4)-bis(5'-adenosyl) tetraphosphate + H2O = 2 ADP + 2 H(+). Functionally, hydrolyzes diadenosine 5',5'''-P1,P4-tetraphosphate to yield ADP. The protein is Bis(5'-nucleosyl)-tetraphosphatase, symmetrical of Glaesserella parasuis serovar 5 (strain SH0165) (Haemophilus parasuis).